The chain runs to 400 residues: Argininosuccinate synthase (400 aa).

ATP is bound at residue 9–17 (AYSGGLDTS). Y87 provides a ligand contact to L-citrulline. G117 contacts ATP. Residues T119, N123, and D124 each coordinate L-aspartate. Residue N123 participates in L-citrulline binding. Residues R127, S176, S185, E261, and Y273 each coordinate L-citrulline.

This sequence belongs to the argininosuccinate synthase family. Type 1 subfamily. In terms of assembly, homotetramer.

The protein resides in the cytoplasm. The enzyme catalyses L-citrulline + L-aspartate + ATP = 2-(N(omega)-L-arginino)succinate + AMP + diphosphate + H(+). It functions in the pathway amino-acid biosynthesis; L-arginine biosynthesis; L-arginine from L-ornithine and carbamoyl phosphate: step 2/3. The protein is Argininosuccinate synthase of Chlorobium phaeobacteroides (strain DSM 266 / SMG 266 / 2430).